Reading from the N-terminus, the 124-residue chain is Small ribosomal subunit protein bS6 (124 aa).

This sequence belongs to the bacterial ribosomal protein bS6 family.

Functionally, binds together with bS18 to 16S ribosomal RNA. This Bordetella avium (strain 197N) protein is Small ribosomal subunit protein bS6.